The primary structure comprises 262 residues: Small ribosomal subunit protein uS2 (262 aa).

This sequence belongs to the universal ribosomal protein uS2 family.

The sequence is that of Small ribosomal subunit protein uS2 from Borrelia garinii subsp. bavariensis (strain ATCC BAA-2496 / DSM 23469 / PBi) (Borreliella bavariensis).